A 735-amino-acid polypeptide reads, in one-letter code: Tripartite terminase subunit 3 (735 aa).

The Nuclear localization signal signature appears at 183–189 (PKKRAKV). A Walker A motif motif is present at residues 258–265 (VPRRHGKT). The Walker B motif signature appears at 352 to 357 (LLFVDE). The active-site For ATPase activity is Glu357. Catalysis depends on for nuclease activity residues Asp509, Glu581, and Asp707.

This sequence belongs to the herpesviridae TRM3 protein family. In terms of assembly, interacts with the terminase subunits TRM1 and TRM2. Interacts with portal protein.

It is found in the host nucleus. Component of the molecular motor that translocates viral genomic DNA in empty capsid during DNA packaging. Forms a tripartite terminase complex together with TRM1 and TRM2 in the host cytoplasm. Once the complex reaches the host nucleus, it interacts with the capsid portal vertex. This portal forms a ring in which genomic DNA is translocated into the capsid. TRM3 carries an RNase H-like nuclease activity that plays an important role for the cleavage of concatemeric viral DNA into unit length genomes. In Homo sapiens (Human), this protein is Tripartite terminase subunit 3.